The primary structure comprises 664 residues: Chaperone protein DnaK (664 aa).

Residue T201 is modified to Phosphothreonine; by autocatalysis. 2 disordered regions span residues 516 to 538 (DAEK…NEAD) and 578 to 664 (APVE…KPND). The segment covering 578-592 (APVEKIKDASEELSR) has biased composition (basic and acidic residues). Low complexity-rich tracts occupy residues 600–617 (AMQS…ANAQ) and 638–649 (AGNSASSNSNNE).

Belongs to the heat shock protein 70 family.

Acts as a chaperone. This is Chaperone protein DnaK from Chlamydia caviae (strain ATCC VR-813 / DSM 19441 / 03DC25 / GPIC) (Chlamydophila caviae).